A 597-amino-acid chain; its full sequence is Aspartate--tRNA(Asp/Asn) ligase (597 aa).

L-aspartate is bound at residue glutamate 170. The tract at residues 194-197 (QLFK) is aspartate. Arginine 216 serves as a coordination point for L-aspartate. ATP-binding positions include 216–218 (RDE) and glutamine 225. Histidine 448 provides a ligand contact to L-aspartate. ATP is bound at residue glutamate 482. Arginine 489 contacts L-aspartate. 534–537 (GWDR) lines the ATP pocket. The disordered stretch occupies residues 558–597 (GGGVDPLTDAPAPITAAQRKESGIDAKPEKAEKAGKPADA). Positions 575 to 597 (QRKESGIDAKPEKAEKAGKPADA) are enriched in basic and acidic residues.

This sequence belongs to the class-II aminoacyl-tRNA synthetase family. Type 1 subfamily. As to quaternary structure, homodimer.

Its subcellular location is the cytoplasm. The enzyme catalyses tRNA(Asx) + L-aspartate + ATP = L-aspartyl-tRNA(Asx) + AMP + diphosphate. Aspartyl-tRNA synthetase with relaxed tRNA specificity since it is able to aspartylate not only its cognate tRNA(Asp) but also tRNA(Asn). Reaction proceeds in two steps: L-aspartate is first activated by ATP to form Asp-AMP and then transferred to the acceptor end of tRNA(Asp/Asn). The protein is Aspartate--tRNA(Asp/Asn) ligase of Mycobacteroides abscessus (strain ATCC 19977 / DSM 44196 / CCUG 20993 / CIP 104536 / JCM 13569 / NCTC 13031 / TMC 1543 / L948) (Mycobacterium abscessus).